The sequence spans 140 residues: L-fucose mutarotase (140 aa).

Histidine 22 serves as the catalytic Proton donor. Substrate-binding positions include aspartate 30, arginine 107, and 129 to 131 (YGN).

It belongs to the RbsD / FucU family. FucU mutarotase subfamily. Homodecamer.

It is found in the cytoplasm. The enzyme catalyses alpha-L-fucose = beta-L-fucose. The protein operates within carbohydrate metabolism; L-fucose metabolism. Functionally, involved in the anomeric conversion of L-fucose. The sequence is that of L-fucose mutarotase from Citrobacter koseri (strain ATCC BAA-895 / CDC 4225-83 / SGSC4696).